Reading from the N-terminus, the 64-residue chain is Large ribosomal subunit protein bL35 (64 aa).

Residues 1–23 (MPKMKTHRGAAKRFKKTKNKIKR) form a disordered region.

This sequence belongs to the bacterial ribosomal protein bL35 family.

The sequence is that of Large ribosomal subunit protein bL35 from Nitratiruptor sp. (strain SB155-2).